Here is a 317-residue protein sequence, read N- to C-terminus: COP9 signalosome complex subunit 6b (317 aa).

Positions 11–164 constitute an MPN domain; that stretch reads FKLHPLVMLN…VTIYESEFHV (154 aa).

It belongs to the peptidase M67A family. CSN6 subfamily. In terms of assembly, component of the CSN complex, probably composed of CSN1, CSN2, CSN3, CSN4, CSN5 (CSN5A or CSN5B), CSN6 (CSN6A or CSN6B), CSN7 and CSN8. Interacts with itself. In the complex, it probably interacts directly with CSN4, CSN5A or CSN5B, and CSN7. Binds to the translation initiation factors TIF3E1.

The protein resides in the cytoplasm. The protein localises to the nucleus. Its function is as follows. Component of the COP9 signalosome complex (CSN), a complex involved in various cellular and developmental processes such as photomorphogenesis and auxin and jasmonate responses. The CSN complex is an essential regulator of the ubiquitin (Ubl) conjugation pathway by mediating the deneddylation of the cullin subunits of SCF-type E3 ligase complexes, leading to decrease the Ubl ligase activity of SCF. It is involved in repression of photomorphogenesis in darkness by regulating the activity of COP1-containing Ubl ligase complexes. The complex is also required for degradation of PSIAA6 by regulating the activity of the Ubl ligase SCF-TIR complex. Essential for the structural integrity of the CSN holocomplex. This chain is COP9 signalosome complex subunit 6b, found in Arabidopsis thaliana (Mouse-ear cress).